A 196-amino-acid polypeptide reads, in one-letter code: V-type proton ATPase proteolipid subunit (196 aa).

The Lumenal segment spans residues 1-25 (MFQLLSFLLSGEATAVERIITDACP). Residues 26 to 46 (VYAPFFGAMGVTAALVFTVMG) form a helical membrane-spanning segment. Topologically, residues 47–72 (AAYGTAKASVGISNMGVMKPDLVIKA) are cytoplasmic. A helical transmembrane segment spans residues 73–93 (FIPVIFAGVIAIYGLIICVIL). At 94 to 111 (VGGIKPNANYTLMKSFTD) the chain is on the lumenal side. A helical membrane pass occupies residues 112 to 132 (LGAGLTVGLCGLAAGMAIGIV). Over 133–150 (GDSGVRAFGQQPKLYVIM) the chain is Cytoplasmic. Residues 151 to 171 (MLILIFSEALGLYGLIIGILL) traverse the membrane as a helical segment. At 172–196 (SSVSDTYCPGQALVPLNSGNVIGKN) the chain is on the lumenal side.

The protein belongs to the V-ATPase proteolipid subunit family. As to quaternary structure, V-ATPase is a heteromultimeric enzyme composed of a peripheral catalytic V1 complex (main components: subunits A, B, C, D, E, and F) attached to an integral membrane V0 proton pore complex (main component: the proteolipid protein; which is present as a hexamer that forms the proton-conducting pore).

Its subcellular location is the vacuole membrane. Functionally, proton-conducting pore forming subunit of the membrane integral V0 complex of vacuolar ATPase. V-ATPase is responsible for acidifying a variety of intracellular compartments in eukaryotic cells. The sequence is that of V-type proton ATPase proteolipid subunit (vatP) from Dictyostelium discoideum (Social amoeba).